The following is a 431-amino-acid chain: Glutamate-1-semialdehyde 2,1-aminomutase (431 aa).

Lys-267 carries the post-translational modification N6-(pyridoxal phosphate)lysine.

Belongs to the class-III pyridoxal-phosphate-dependent aminotransferase family. HemL subfamily. As to quaternary structure, homodimer. It depends on pyridoxal 5'-phosphate as a cofactor.

It localises to the cytoplasm. It carries out the reaction (S)-4-amino-5-oxopentanoate = 5-aminolevulinate. It participates in porphyrin-containing compound metabolism; protoporphyrin-IX biosynthesis; 5-aminolevulinate from L-glutamyl-tRNA(Glu): step 2/2. This Myxococcus xanthus (strain DK1622) protein is Glutamate-1-semialdehyde 2,1-aminomutase.